Here is a 574-residue protein sequence, read N- to C-terminus: E3 ubiquitin-protein ligase TRIM23 (574 aa).

The RING-type; degenerate zinc-finger motif lies at 31-76; it reads CGVCEDVFSLQGDKVPRLLLCGHTVCHDCLTRLPLHGRAIRCPFDR. The B box-type; degenerate zinc-finger motif lies at 122–168; the sequence is ESIIRCDEDEAHLASVYCTVCATHLCSECSQVTHSTKTLAKHRRVPL. Residues 352-379 are a coiled coil; that stretch reads RVVLAKQEITRLLETLQKQQQQFTEVAD. Residues 390-574 form an ARF-like region; sequence TFTKDNRVHI…LVAAGVLDVA (185 aa). GTP-binding positions include 411-418, 454-458, and 513-516; these read GLDGAGKT, DVGGK, and NKQD.

This sequence in the C-terminal section; belongs to the small GTPase superfamily. Arf family. In terms of assembly, homodimer. Interacts with PSCD1. Interacts with UBE2D2. Interacts with TBK1 (via N-terminal kinase domain) and p62/SQSTM1. As to quaternary structure, (Microbial infection) Interacts with human cytomegalovirus protein UL144; this interaction might cause autoubiquitination of TRAF6, leading to NF-kappa-B activation.

Its subcellular location is the cytoplasm. The protein localises to the endomembrane system. It is found in the golgi apparatus membrane. The protein resides in the lysosome membrane. It carries out the reaction S-ubiquitinyl-[E2 ubiquitin-conjugating enzyme]-L-cysteine + [acceptor protein]-L-lysine = [E2 ubiquitin-conjugating enzyme]-L-cysteine + N(6)-ubiquitinyl-[acceptor protein]-L-lysine.. The protein operates within protein modification; protein ubiquitination. In terms of biological role, acts as an E3 ubiquitin-protein ligase. Plays an essential role in autophagy activation during viral infection. Mechanistically, activates TANK-binding kinase 1/TBK1 by facilitating its dimerization and ability to phosphorylate the selective autophagy receptor SQSTM1. In order to achieve this function, TRIM23 mediates 'Lys-27'-linked auto-ubiquitination of its ADP-ribosylation factor (ARF) domain to induce its GTPase activity and its recruitment to autophagosomes. Functionally, (Microbial infection) Mediates TRAF6 auto-ubiquitination in the presence of human cytomegalovirus protein UL144, resulting in the virally controlled activation of NF-kappa-B stimulation at early times of HCMV infection. The chain is E3 ubiquitin-protein ligase TRIM23 (TRIM23) from Homo sapiens (Human).